Consider the following 525-residue polypeptide: Glutamyl-tRNA(Gln) amidotransferase subunit A, mitochondrial (525 aa).

Residues lysine 76 and serine 168 each act as charge relay system in the active site. Serine 192 serves as the catalytic Acyl-ester intermediate.

It belongs to the amidase family. GatA subfamily. Subunit of the heterotrimeric GatCAB amidotransferase (AdT) complex, composed of A (QRSL1), B (GATB) and C (GATC) subunits.

It localises to the mitochondrion. The enzyme catalyses L-glutamyl-tRNA(Gln) + L-glutamine + ATP + H2O = L-glutaminyl-tRNA(Gln) + L-glutamate + ADP + phosphate + H(+). Allows the formation of correctly charged Gln-tRNA(Gln) through the transamidation of misacylated Glu-tRNA(Gln) in the mitochondria. The reaction takes place in the presence of glutamine and ATP through an activated gamma-phospho-Glu-tRNA(Gln). The protein is Glutamyl-tRNA(Gln) amidotransferase subunit A, mitochondrial (Qrsl1) of Mus musculus (Mouse).